Consider the following 273-residue polypeptide: Formamidopyrimidine-DNA glycosylase (273 aa).

P2 (schiff-base intermediate with DNA) is an active-site residue. The active-site Proton donor is E3. The active-site Proton donor; for beta-elimination activity is the K58. The DNA site is built by H92, R111, and R153. Residues 238–272 (RVYGREGQKCFNCSSTILKTKNSGRSTFYCKTCQY) form an FPG-type zinc finger. Catalysis depends on R262, which acts as the Proton donor; for delta-elimination activity.

It belongs to the FPG family. Monomer. Requires Zn(2+) as cofactor.

It carries out the reaction Hydrolysis of DNA containing ring-opened 7-methylguanine residues, releasing 2,6-diamino-4-hydroxy-5-(N-methyl)formamidopyrimidine.. The enzyme catalyses 2'-deoxyribonucleotide-(2'-deoxyribose 5'-phosphate)-2'-deoxyribonucleotide-DNA = a 3'-end 2'-deoxyribonucleotide-(2,3-dehydro-2,3-deoxyribose 5'-phosphate)-DNA + a 5'-end 5'-phospho-2'-deoxyribonucleoside-DNA + H(+). Functionally, involved in base excision repair of DNA damaged by oxidation or by mutagenic agents. Acts as a DNA glycosylase that recognizes and removes damaged bases. Has a preference for oxidized purines, such as 7,8-dihydro-8-oxoguanine (8-oxoG). Has AP (apurinic/apyrimidinic) lyase activity and introduces nicks in the DNA strand. Cleaves the DNA backbone by beta-delta elimination to generate a single-strand break at the site of the removed base with both 3'- and 5'-phosphates. The polypeptide is Formamidopyrimidine-DNA glycosylase (Rickettsia canadensis (strain McKiel)).